The sequence spans 321 residues: tRNA uridine(34) hydroxylase (321 aa).

The region spanning 123-217 (SDPDVTVIDT…YLEEVPEGNS (95 aa)) is the Rhodanese domain. C177 functions as the Cysteine persulfide intermediate in the catalytic mechanism. Basic and acidic residues predominate over residues 294-308 (RKGELHIGDRADIAK). The tract at residues 294–321 (RKGELHIGDRADIAKSRTTQGAPSADGE) is disordered.

This sequence belongs to the TrhO family.

It carries out the reaction uridine(34) in tRNA + AH2 + O2 = 5-hydroxyuridine(34) in tRNA + A + H2O. In terms of biological role, catalyzes oxygen-dependent 5-hydroxyuridine (ho5U) modification at position 34 in tRNAs. In Teredinibacter turnerae (strain ATCC 39867 / T7901), this protein is tRNA uridine(34) hydroxylase.